The sequence spans 192 residues: A-type ATP synthase subunit E (192 aa).

This sequence belongs to the V-ATPase E subunit family. In terms of assembly, has multiple subunits with at least A(3), B(3), C, D, E, F, H, I and proteolipid K(x).

The protein resides in the cell membrane. In terms of biological role, component of the A-type ATP synthase that produces ATP from ADP in the presence of a proton gradient across the membrane. The chain is A-type ATP synthase subunit E from Sulfolobus acidocaldarius (strain ATCC 33909 / DSM 639 / JCM 8929 / NBRC 15157 / NCIMB 11770).